Reading from the N-terminus, the 312-residue chain is Very-long-chain 3-oxoacyl-CoA reductase (312 aa).

The chain crosses the membrane as a helical span at residues 4 to 24; it reads ALPAAGFLYWVGAGTVAYLAL. 50–79 provides a ligand contact to NADP(+); it reads GEWAVVTGGTDGIGKSYAEELAKRGMKVVL. The next 2 helical transmembrane spans lie at 182 to 202 and 271 to 291; these read GAIL…LTIY and GYLI…WIYL. A substrate-binding site is contributed by S189. The active-site Proton acceptor is the Y202. Positions 308 to 312 match the Di-lysine motif motif; that stretch reads KIKKN.

The protein belongs to the short-chain dehydrogenases/reductases (SDR) family. 17-beta-HSD 3 subfamily.

It localises to the endoplasmic reticulum membrane. It carries out the reaction a very-long-chain (3R)-3-hydroxyacyl-CoA + NADP(+) = a very-long-chain 3-oxoacyl-CoA + NADPH + H(+). The enzyme catalyses 17beta-estradiol + NAD(+) = estrone + NADH + H(+). It catalyses the reaction 17beta-estradiol + NADP(+) = estrone + NADPH + H(+). The catalysed reaction is 3-oxooctadecanoyl-CoA + NADPH + H(+) = (3R)-hydroxyoctadecanoyl-CoA + NADP(+). It carries out the reaction (7Z,10Z,13Z,16Z)-3-oxodocosatetraenoyl-CoA + NADPH + H(+) = (3R)-hydroxy-(7Z,10Z,13Z,16Z)-docosatetraenoyl-CoA + NADP(+). The enzyme catalyses 3-oxo-(7Z,10Z,13Z,16Z,19Z)-docosapentaenoyl-CoA + NADPH + H(+) = (3R)-hydroxy-(7Z,10Z,13Z,16Z,19Z)-docosapentaenoyl-CoA + NADP(+). It catalyses the reaction (8Z,11Z,14Z)-3-oxoeicosatrienoyl-CoA + NADPH + H(+) = (3R)-hydroxy-(8Z,11Z,14Z)-eicosatrienoyl-CoA + NADP(+). The protein operates within lipid metabolism; fatty acid biosynthesis. It participates in steroid biosynthesis; estrogen biosynthesis. In terms of biological role, catalyzes the second of the four reactions of the long-chain fatty acids elongation cycle. This endoplasmic reticulum-bound enzymatic process, allows the addition of two carbons to the chain of long- and very long-chain fatty acids/VLCFAs per cycle. This enzyme has a 3-ketoacyl-CoA reductase activity, reducing 3-ketoacyl-CoA to 3-hydroxyacyl-CoA, within each cycle of fatty acid elongation. Thereby, it may participate in the production of VLCFAs of different chain lengths that are involved in multiple biological processes as precursors of membrane lipids and lipid mediators. May also catalyze the transformation of estrone (E1) into estradiol (E2) and play a role in estrogen formation. This Macaca fascicularis (Crab-eating macaque) protein is Very-long-chain 3-oxoacyl-CoA reductase (HSD17B12).